A 247-amino-acid polypeptide reads, in one-letter code: tRNA pseudouridine synthase A (247 aa).

Asp-53 (nucleophile) is an active-site residue. Tyr-111 lines the substrate pocket.

This sequence belongs to the tRNA pseudouridine synthase TruA family. Homodimer.

The catalysed reaction is uridine(38/39/40) in tRNA = pseudouridine(38/39/40) in tRNA. Formation of pseudouridine at positions 38, 39 and 40 in the anticodon stem and loop of transfer RNAs. The chain is tRNA pseudouridine synthase A from Bacillus velezensis (strain DSM 23117 / BGSC 10A6 / LMG 26770 / FZB42) (Bacillus amyloliquefaciens subsp. plantarum).